The chain runs to 270 residues: Orotidine 5'-phosphate decarboxylase (270 aa).

Lysine 89 (proton donor) is an active-site residue.

It belongs to the OMP decarboxylase family. Type 2 subfamily.

It carries out the reaction orotidine 5'-phosphate + H(+) = UMP + CO2. It participates in pyrimidine metabolism; UMP biosynthesis via de novo pathway; UMP from orotate: step 2/2. The protein is Orotidine 5'-phosphate decarboxylase of Dehalococcoides mccartyi (strain CBDB1).